Consider the following 123-residue polypeptide: Large ribosomal subunit protein bL12 (123 aa).

The protein belongs to the bacterial ribosomal protein bL12 family. Homodimer. Part of the ribosomal stalk of the 50S ribosomal subunit. Forms a multimeric L10(L12)X complex, where L10 forms an elongated spine to which 2 to 4 L12 dimers bind in a sequential fashion. Binds GTP-bound translation factors.

In terms of biological role, forms part of the ribosomal stalk which helps the ribosome interact with GTP-bound translation factors. Is thus essential for accurate translation. This is Large ribosomal subunit protein bL12 from Shewanella sp. (strain MR-4).